A 299-amino-acid polypeptide reads, in one-letter code: Cuticle collagen 34 (299 aa).

Residues 105 to 282 form a disordered region; the sequence is PGPAGTPGKP…GSPGERGICP (178 aa). A compositionally biased stretch (pro residues) spans 129-162; sequence PGRPPQQPCEPITPPPCKPCPQGPPGPPGPPGPP. Over residues 164–181 the composition is skewed to low complexity; the sequence is DSGEPGSPGLPGQDAAPG. Composition is skewed to pro residues over residues 182-195 and 215-233; these read EPGPKGPPGPPGAP and PGEPGPPGEAGPQGPPGSP. The interval 216–278 is triple-helical region; it reads GEPGPPGEAG…AGPPGSPGER (63 aa). Low complexity predominate over residues 251–263; it reads NGPDGQPGADGNP. Over residues 265–274 the composition is skewed to pro residues; it reads APGPAGPPGS.

It belongs to the cuticular collagen family. As to quaternary structure, collagen polypeptide chains are complexed within the cuticle by disulfide bonds and other types of covalent cross-links.

Nematode cuticles are composed largely of collagen-like proteins. The cuticle functions both as an exoskeleton and as a barrier to protect the worm from its environment. This Caenorhabditis elegans protein is Cuticle collagen 34 (col-34).